Consider the following 360-residue polypeptide: Ribosomal RNA large subunit methyltransferase M (360 aa).

S-adenosyl-L-methionine contacts are provided by residues S192, A225–G228, D244, D264, and D280. K309 (proton acceptor) is an active-site residue.

This sequence belongs to the class I-like SAM-binding methyltransferase superfamily. RNA methyltransferase RlmE family. RlmM subfamily. Monomer.

The protein localises to the cytoplasm. It catalyses the reaction cytidine(2498) in 23S rRNA + S-adenosyl-L-methionine = 2'-O-methylcytidine(2498) in 23S rRNA + S-adenosyl-L-homocysteine + H(+). In terms of biological role, catalyzes the 2'-O-methylation at nucleotide C2498 in 23S rRNA. The protein is Ribosomal RNA large subunit methyltransferase M of Alkalilimnicola ehrlichii (strain ATCC BAA-1101 / DSM 17681 / MLHE-1).